We begin with the raw amino-acid sequence, 171 residues long: Neuronal vesicle trafficking-associated protein 2 (171 aa).

Residues 1-21 (MVKLNSNPGEKGAKPPSVEDG) form a disordered region. The Cytoplasmic portion of the chain corresponds to 1–71 (MVKLNSNPGE…FRVPKIAEFT (71 aa)). Residues 72 to 92 (VTILVSLALAFLACIVFLVVY) form a helical; Signal-anchor for type II membrane protein membrane-spanning segment. Residues 93–171 (KAFTYDHSCP…EPKPPKTQGH (79 aa)) lie on the Lumenal side of the membrane.

This sequence belongs to the NSG family. In terms of tissue distribution, specifically expressed in neural and neuroendocrine tissues. Pituitary and less in adrenal gland and testis. Expressed in the hippocampus throughout development. Remains enriched in layer V cortical neurons during development. At P0, broadly expressed in the neocortex. Is down-regulated overall at P8 and P14, but remains relatively enriched in layer V. At P0 is lower expressed in the cerebellum. Expression remains low throughout development, and is undetectable by adulthood.

The protein localises to the membrane. It is found in the golgi apparatus. The protein resides in the trans-Golgi network membrane. Its subcellular location is the cell projection. It localises to the dendrite. The protein localises to the endosome membrane. It is found in the early endosome membrane. The protein resides in the late endosome membrane. Its subcellular location is the lysosome lumen. It localises to the cytoplasmic vesicle membrane. The protein localises to the golgi stack membrane. It is found in the endosome. The protein resides in the multivesicular body membrane. The protein is Neuronal vesicle trafficking-associated protein 2 of Mus musculus (Mouse).